We begin with the raw amino-acid sequence, 107 residues long: L-rhamnose mutarotase (107 aa).

Tyrosine 18 contacts substrate. The Proton donor role is filled by histidine 22. Substrate-binding positions include tyrosine 41 and tryptophan 76–tryptophan 77.

Belongs to the rhamnose mutarotase family. As to quaternary structure, homodimer.

The protein localises to the cytoplasm. The enzyme catalyses alpha-L-rhamnose = beta-L-rhamnose. It participates in carbohydrate metabolism; L-rhamnose metabolism. Functionally, involved in the anomeric conversion of L-rhamnose. This chain is L-rhamnose mutarotase, found in Paraburkholderia xenovorans (strain LB400).